The sequence spans 432 residues: Glutamate-1-semialdehyde 2,1-aminomutase (432 aa).

Lys265 is subject to N6-(pyridoxal phosphate)lysine.

This sequence belongs to the class-III pyridoxal-phosphate-dependent aminotransferase family. HemL subfamily. As to quaternary structure, homodimer. Requires pyridoxal 5'-phosphate as cofactor.

It localises to the cytoplasm. The catalysed reaction is (S)-4-amino-5-oxopentanoate = 5-aminolevulinate. It functions in the pathway porphyrin-containing compound metabolism; protoporphyrin-IX biosynthesis; 5-aminolevulinate from L-glutamyl-tRNA(Glu): step 2/2. In Photobacterium profundum (strain SS9), this protein is Glutamate-1-semialdehyde 2,1-aminomutase.